Reading from the N-terminus, the 372-residue chain is Lipoyl synthase, mitochondrial (372 aa).

Positions 106, 111, 117, 137, 141, 144, and 352 each coordinate [4Fe-4S] cluster. Residues 122 to 341 form the Radical SAM core domain; it reads EYGTATATIM…EKAGNELGFL (220 aa).

It belongs to the radical SAM superfamily. Lipoyl synthase family. [4Fe-4S] cluster serves as cofactor.

Its subcellular location is the mitochondrion. The enzyme catalyses [[Fe-S] cluster scaffold protein carrying a second [4Fe-4S](2+) cluster] + N(6)-octanoyl-L-lysyl-[protein] + 2 oxidized [2Fe-2S]-[ferredoxin] + 2 S-adenosyl-L-methionine + 4 H(+) = [[Fe-S] cluster scaffold protein] + N(6)-[(R)-dihydrolipoyl]-L-lysyl-[protein] + 4 Fe(3+) + 2 hydrogen sulfide + 2 5'-deoxyadenosine + 2 L-methionine + 2 reduced [2Fe-2S]-[ferredoxin]. It functions in the pathway protein modification; protein lipoylation via endogenous pathway; protein N(6)-(lipoyl)lysine from octanoyl-[acyl-carrier-protein]: step 2/2. Catalyzes the radical-mediated insertion of two sulfur atoms into the C-6 and C-8 positions of the octanoyl moiety bound to the lipoyl domains of lipoate-dependent enzymes, thereby converting the octanoylated domains into lipoylated derivatives. This is Lipoyl synthase, mitochondrial (lias) from Xenopus laevis (African clawed frog).